The following is a 252-amino-acid chain: CLAVATA3/ESR (CLE)-related protein 4A-2 (252 aa).

The signal sequence occupies residues 1 to 21 (MAKNAMLCLLILRVVLALAFA). A required for secretion from the host cytoplasm to the host apoplasm region spans residues 21-83 (ATNKKGDEEP…SNQLPNNNWM (63 aa)). N-linked (GlcNAc...) asparagine glycosylation is present at asparagine 32. The segment at 116-252 (RKTGMHSQRH…APAGPDPIHH (137 aa)) is disordered. Basic and acidic residues-rich tracts occupy residues 125–137 (HHEE…EKRV), 144–179 (PIHH…EKRV), 186–200 (PIHH…EKRA), and 207–242 (PTHH…EKRG). One copy of the A-1 repeat lies at 127-135 (EETTLEQEK). The 6 X approximate repeat A stretch occupies residues 127-219 (EETTLEQEKR…HEETTLEQEK (93 aa)). Residues 136-147 (RVAGAGPDPIHH) form a CLE-1 repeat. The segment at 136–252 (RVAGAGPDPI…APAGPDPIHH (117 aa)) is 6 X approximate repeat CLE. Residues 148–156 (QDTTLEQEK) form an A-2 repeat. Residues 157 to 168 (RAVPAGPDPKHH) form a CLE-2 repeat. The stretch at 169–177 (EETTLEQEK) is one A-3 repeat. The stretch at 178–189 (RVAGAGPDPIHH) is one CLE-3 repeat. The stretch at 190–198 (QDTTLEQEK) is one A-4 repeat. The CLE-4 repeat unit spans residues 199-210 (RAVPAGPDPTHH). The A-5 repeat unit spans residues 211-219 (EETTLEQEK). One copy of the CLE-5 repeat lies at 220–231 (RAVPAGPDPKHH). The stretch at 232-240 (EETTFEQEK) is one A-6 repeat. The CLE-6 repeat unit spans residues 241-252 (RGAPAGPDPIHH).

This sequence belongs to the CLV3/ESR signal peptide family. In terms of tissue distribution, highly expressed exclusively within the dorsal esophageal gland cell during syncytium formation in host plants.

It localises to the secreted. The protein resides in the host cytoplasm. The protein localises to the host extracellular space. It is found in the extracellular space. Its subcellular location is the apoplast. Functionally, mimics host plant CLE extracellular signal peptides that regulate cell fate. May play a role in the differentiation or division of feeding cells (syncytia) induced in plant roots during infection. The chain is CLAVATA3/ESR (CLE)-related protein 4A-2 (CLE-4A-2) from Globodera rostochiensis (Golden nematode worm).